We begin with the raw amino-acid sequence, 203 residues long: Thymidylate kinase (203 aa).

10 to 17 contributes to the ATP binding site; it reads GTEGSGKS.

This sequence belongs to the thymidylate kinase family.

It catalyses the reaction dTMP + ATP = dTDP + ADP. Functionally, phosphorylation of dTMP to form dTDP in both de novo and salvage pathways of dTTP synthesis. In Dichelobacter nodosus (strain VCS1703A), this protein is Thymidylate kinase.